Consider the following 38-residue polypeptide: Alpha-conotoxin LvIC (38 aa).

Residues 1–21 (SNGRNAAAGDKPSYWITLAIT) constitute a propeptide that is removed on maturation. 2 disulfide bridges follow: cysteine 23/cysteine 29 and cysteine 24/cysteine 34. Glutamine 35 is modified (glutamine amide).

It belongs to the conotoxin A superfamily. The two analogs ([DelQ14]LvIC and [D1G,DelQ14]LvIC) are amidated at their N-terminal Cys. Expressed by the venom gland.

Its subcellular location is the secreted. Alpha-conotoxins bind to the nicotinic acetylcholine receptors (nAChR) and inhibit them. This synthetic peptide inhibits rat alpha-6/alpha-3-beta-4 nAChR (IC(50)=3.3 uM). The polypeptide is Alpha-conotoxin LvIC (Conus lividus (Livid cone)).